Here is a 1048-residue protein sequence, read N- to C-terminus: Anguibactin system regulator (1048 aa).

One can recognise a Carrier domain in the interval 965-1039 (PIITASEDRV…AFAIIMDRCR (75 aa)).

Belongs to the ATP-dependent AMP-binding enzyme family.

The protein operates within siderophore biosynthesis; anguibactin biosynthesis. Functionally, bifunctional protein that plays an essential role in virulence. Plays a role in both production of the siderophore anguibactin and regulation of iron transport genes. This chain is Anguibactin system regulator (angR), found in Vibrio anguillarum (strain ATCC 68554 / 775) (Listonella anguillarum).